Here is a 277-residue protein sequence, read N- to C-terminus: MDNVVDRHVFYISDGTAITAEVLGHAVMSQFPVTISSITLPFVENESRARAVKDQIDAIYQQTGVRPLVFYSIVLPEIRAIILQSEGFCQDIVQALVAPLQQEMKLDPTPIAHRTHGLNPGNLNKYDARIAAIDYTLAHDDGISLRNLDQAQVILLGVSRCGKTPTSLYLAMQFGIRAANYPFIADDMDNLVLPTSLKPLQHKLFGLTIDPERLAAIREERRENSRYASLRQCRMEVAEVEALYRKNQIPCLNSTNYSVEEIATKILDIMGLNRRMY.

Residue 157–164 (GVSRCGKT) participates in ADP binding.

Belongs to the pyruvate, phosphate/water dikinase regulatory protein family. PSRP subfamily.

It carries out the reaction [pyruvate, water dikinase] + ADP = [pyruvate, water dikinase]-phosphate + AMP + H(+). The catalysed reaction is [pyruvate, water dikinase]-phosphate + phosphate + H(+) = [pyruvate, water dikinase] + diphosphate. Functionally, bifunctional serine/threonine kinase and phosphorylase involved in the regulation of the phosphoenolpyruvate synthase (PEPS) by catalyzing its phosphorylation/dephosphorylation. This chain is Putative phosphoenolpyruvate synthase regulatory protein, found in Citrobacter koseri (strain ATCC BAA-895 / CDC 4225-83 / SGSC4696).